Consider the following 449-residue polypeptide: MSAASLKVTSTARPGSRLAVEVAIPAERSQASYEAAISQLSRSVNLPGFRKGKVPRSVLVQQLGGLRIRATALENLVDAIWRDTIKQETIEALGQPEVDGGYEALLESFEPGKPLSITFEADVAPTPTLKTTKGLKAEAESVSFDAAKVDEMLEQSRRQLATVVPVEGRKAAQGDIAVVGFKGTYSDDGSEIEGGSSESMDVDLEHGRMIPGFIEGVVGMTVGDSKTVACNFPEDYPKEDARGRKASFEIELKDLKTRELPDLDDDFAKQASEQETLAELRTDLEKRLKDDAERRTTSNRRDALLAALVEQLEVELPETLVQQEVRNLVEQTAAQFSQQGMDVKSLFTPDLVRNLMETSRPEAEERLRRSLALSALAEAESLKIEDPEIDAKVKEVTAQLSGERDIDPNRLRQAVIEDLLQEKLLGWLEENSTVTEKAPDKDKPSVTDA.

A PPIase FKBP-type domain is found at 174–261 (GDIAVVGFKG…LKDLKTRELP (88 aa)). Positions 430 to 449 (ENSTVTEKAPDKDKPSVTDA) are disordered. Residues 437–449 (KAPDKDKPSVTDA) show a composition bias toward basic and acidic residues.

The protein belongs to the FKBP-type PPIase family. Tig subfamily.

Its subcellular location is the cytoplasm. It carries out the reaction [protein]-peptidylproline (omega=180) = [protein]-peptidylproline (omega=0). Involved in protein export. Acts as a chaperone by maintaining the newly synthesized protein in an open conformation. Functions as a peptidyl-prolyl cis-trans isomerase. The sequence is that of Trigger factor from Synechococcus sp. (strain CC9311).